A 224-amino-acid chain; its full sequence is MRLLLAEDNRELAHWLEKALVQNGFAVDCVFDGLAADHLLHSEMYALAVLDINMPGMDGLEVVQRLRKRGQTLPVLLLTARSAVADRVKGLNVGADDYLPKPFELEELDARLRALLRRSAGQVHEVQQLGELIFHDEGYFLLQGQPLALTPREQALLTVLMYRRTRPVSRQQLFEQVFSLNDEVSPESIELYIHRLRKKLQGSDVRITTLRGLGYVLERGDEVG.

The 115-residue stretch at 2–116 (RLLLAEDNRE…ELDARLRALL (115 aa)) folds into the Response regulatory domain. Aspartate 51 carries the 4-aspartylphosphate modification. The segment at residues 121-219 (GQVHEVQQLG…LRGLGYVLER (99 aa)) is a DNA-binding region (ompR/PhoB-type).

In terms of biological role, transcriptional activator of the tctI tricarboxylate transport system operon. The polypeptide is Transcriptional regulatory protein TctD (tctD) (Salmonella typhimurium (strain SL1344)).